Here is a 211-residue protein sequence, read N- to C-terminus: Thymidylate kinase (211 aa).

Residue 12–19 coordinates ATP; that stretch reads GIDGSGKS.

It belongs to the thymidylate kinase family.

It carries out the reaction dTMP + ATP = dTDP + ADP. In terms of biological role, phosphorylation of dTMP to form dTDP in both de novo and salvage pathways of dTTP synthesis. The chain is Thymidylate kinase from Ruegeria pomeroyi (strain ATCC 700808 / DSM 15171 / DSS-3) (Silicibacter pomeroyi).